Consider the following 344-residue polypeptide: Heat-inducible transcription repressor HrcA (344 aa).

The protein belongs to the HrcA family.

Negative regulator of class I heat shock genes (grpE-dnaK-dnaJ and groELS operons). Prevents heat-shock induction of these operons. The chain is Heat-inducible transcription repressor HrcA from Geobacillus kaustophilus (strain HTA426).